A 238-amino-acid polypeptide reads, in one-letter code: Transcriptional activator HAC1 (238 aa).

Residues Met-1 to Glu-39 are disordered. Polar residues predominate over residues Glu-7 to Ser-24. The bZIP domain maps to Glu-39–Ala-102. A basic motif region spans residues Arg-41–Arg-61. The leucine-zipper stretch occupies residues Leu-67 to Leu-74. The interval Gly-115 to Asp-152 is disordered. Residues Ser-117–Ser-134 are compositionally biased toward low complexity.

This sequence belongs to the bZIP family. As to quaternary structure, homodimer.

The protein localises to the nucleus. Functionally, transcriptional activator involved in the unfolded protein response (UPR) pathway. Recognizes and binds to the UPR element (UPRE) in the promoter of UPR-regulated genes such as KAR2, PDI1, EUG1 and FKB2. Increases the synthesis of endoplasmic reticulum-resident proteins required for protein folding as well as components of the secretory pathway. This is Transcriptional activator HAC1 (HAC1) from Saccharomyces cerevisiae (strain ATCC 204508 / S288c) (Baker's yeast).